The sequence spans 124 residues: Ribonuclease pancreatic (124 aa).

Positions 1-13 (KESAAAKFERQHM) are enriched in basic and acidic residues. The tract at residues 1–24 (KESAAAKFERQHMDSSTSSASSSN) is disordered. Substrate is bound by residues K7 and R10. H12 serves as the catalytic Proton acceptor. 4 disulfide bridges follow: C26/C84, C40/C95, C58/C110, and C65/C72. An N-linked (GlcNAc...) asparagine; partial glycan is attached at N34. Residues 41–45 (KPVNT), K66, and R85 contribute to the substrate site. The active-site Proton donor is the H119.

Belongs to the pancreatic ribonuclease family. In terms of assembly, monomer. Interacts with and forms tight 1:1 complexes with RNH1. Dimerization of two such complexes may occur. Interaction with RNH1 inhibits this protein. Pancreas.

The protein localises to the secreted. It carries out the reaction an [RNA] containing cytidine + H2O = an [RNA]-3'-cytidine-3'-phosphate + a 5'-hydroxy-ribonucleotide-3'-[RNA].. The enzyme catalyses an [RNA] containing uridine + H2O = an [RNA]-3'-uridine-3'-phosphate + a 5'-hydroxy-ribonucleotide-3'-[RNA].. In terms of biological role, endonuclease that catalyzes the cleavage of RNA on the 3' side of pyrimidine nucleotides. Acts on single-stranded and double-stranded RNA. The chain is Ribonuclease pancreatic (RNASE1) from Ovis aries (Sheep).